Here is a 208-residue protein sequence, read N- to C-terminus: MAKSSRSKTSKAWLKEHFNDPWVAKAQEQGYRSRASFKLLEMNEKDRLFRPGMAVLDLGAAPGGWSQVAGQLIGGRGTVIASDILAMDALPDVTFIEGDFREEVIYEQILMALGDQRADLVMSDMAPNMSGNSAVDQPRAMYLAELALDMAERVLEPDGVFLVKVFQGEGFEDYRKALQSRFKRVVSRKPAASRARSTEVYQLGFGLK.

5 residues coordinate S-adenosyl-L-methionine: Gly63, Trp65, Asp83, Asp99, and Asp124. The Proton acceptor role is filled by Lys164.

The protein belongs to the class I-like SAM-binding methyltransferase superfamily. RNA methyltransferase RlmE family.

The protein resides in the cytoplasm. The catalysed reaction is uridine(2552) in 23S rRNA + S-adenosyl-L-methionine = 2'-O-methyluridine(2552) in 23S rRNA + S-adenosyl-L-homocysteine + H(+). In terms of biological role, specifically methylates the uridine in position 2552 of 23S rRNA at the 2'-O position of the ribose in the fully assembled 50S ribosomal subunit. In Alcanivorax borkumensis (strain ATCC 700651 / DSM 11573 / NCIMB 13689 / SK2), this protein is Ribosomal RNA large subunit methyltransferase E.